We begin with the raw amino-acid sequence, 155 residues long: Small ribosomal subunit protein uS7cz/uS7cy (155 aa).

This sequence belongs to the universal ribosomal protein uS7 family. As to quaternary structure, part of the 30S ribosomal subunit.

The protein localises to the plastid. It is found in the chloroplast. Its function is as follows. One of the primary rRNA binding proteins, it binds directly to 16S rRNA where it nucleates assembly of the head domain of the 30S subunit. The chain is Small ribosomal subunit protein uS7cz/uS7cy (rps7-A) from Atropa belladonna (Belladonna).